A 136-amino-acid chain; its full sequence is Nucleoside diphosphate kinase (136 aa).

ATP contacts are provided by Lys-10, Phe-58, Arg-86, Thr-92, Arg-104, and Asn-114. His-117 acts as the Pros-phosphohistidine intermediate in catalysis.

It belongs to the NDK family. In terms of assembly, homotetramer. It depends on Mg(2+) as a cofactor.

The protein resides in the cytoplasm. The enzyme catalyses a 2'-deoxyribonucleoside 5'-diphosphate + ATP = a 2'-deoxyribonucleoside 5'-triphosphate + ADP. It catalyses the reaction a ribonucleoside 5'-diphosphate + ATP = a ribonucleoside 5'-triphosphate + ADP. Functionally, major role in the synthesis of nucleoside triphosphates other than ATP. The ATP gamma phosphate is transferred to the NDP beta phosphate via a ping-pong mechanism, using a phosphorylated active-site intermediate. This chain is Nucleoside diphosphate kinase, found in Mycobacterium leprae (strain TN).